A 529-amino-acid polypeptide reads, in one-letter code: F-box/LRR-repeat protein At5g63520 (529 aa).

Residues Met-1–Lys-22 form a disordered region. The region spanning Val-31–Ser-78 is the F-box domain. 2 LRR repeats span residues Gly-265–Arg-288 and Gln-418–Leu-441.

The sequence is that of F-box/LRR-repeat protein At5g63520 from Arabidopsis thaliana (Mouse-ear cress).